The following is an 843-amino-acid chain: Translation initiation factor IF-2 (843 aa).

Disordered stretches follow at residues 55–185 (AEAV…EDRD) and 209–228 (KVEEEQKPKEPQKKNKQVKV). A compositionally biased stretch (basic and acidic residues) spans 62-106 (PQEKPKKSAPKKEEKPKEEVKKEAEEKVAASKKEEEKPQEKKSVE). Residues 114–128 (LKKRRGLVIVKKKRP) show a composition bias toward basic residues. Basic and acidic residues predominate over residues 129 to 141 (KVEPKVEEKEAKQ). The span at 156–165 (LKRKPKKAKK) shows a compositional bias: basic residues. 2 stretches are compositionally biased toward basic and acidic residues: residues 171–185 (KKNEGKKIEILEDRD) and 209–221 (KVEEEQKPKEPQK). Positions 342-511 (ERPPVITIMG…LLQAEIMELK (170 aa)) constitute a tr-type G domain. The G1 stretch occupies residues 351–358 (GHVDHGKT). 351–358 (GHVDHGKT) contributes to the GTP binding site. Positions 376–380 (GITQH) are G2. The interval 397 to 400 (DTPG) is G3. GTP-binding positions include 397–401 (DTPGH) and 451–454 (NKID). The interval 451-454 (NKID) is G4. Residues 487–489 (SAK) form a G5 region.

This sequence belongs to the TRAFAC class translation factor GTPase superfamily. Classic translation factor GTPase family. IF-2 subfamily.

The protein resides in the cytoplasm. Functionally, one of the essential components for the initiation of protein synthesis. Protects formylmethionyl-tRNA from spontaneous hydrolysis and promotes its binding to the 30S ribosomal subunits. Also involved in the hydrolysis of GTP during the formation of the 70S ribosomal complex. In Nitratiruptor sp. (strain SB155-2), this protein is Translation initiation factor IF-2.